The following is a 310-amino-acid chain: MKVFAGNSNRHLAEAICKYLNVPLGNATVKRFADQEIFVEISENVRGEDVFIVQSTSFPANDHLMELLIMIDAMRRSSAKRITAVLPYFGYARQDRKAGPRTPISAKLVANLITEAGADRVLTLDLHAGQIQGFFDIPTDNLFAAPILARDVKDHYDTNNVMVVSPDVGGVVRARALSKRLDCLLAIVDKRRDRPGESEVMNVIGDVSGKDCILIDDIIDSGGTLCNAAEALLKKGATSVTAYITHGVLSGGAVARVASSKLRELVITDSIQPTTGVQSAHNIRVVSTAGLLGEAINRTAQEQSVSGLFD.

ATP is bound by residues 34-36 (DQE) and 93-94 (RQ). The Mg(2+) site is built by H127 and D167. Residue K190 is part of the active site. Residues R192, D216, and 220 to 224 (DSGGT) each bind D-ribose 5-phosphate.

It belongs to the ribose-phosphate pyrophosphokinase family. Class I subfamily. As to quaternary structure, homohexamer. Mg(2+) serves as cofactor.

Its subcellular location is the cytoplasm. It catalyses the reaction D-ribose 5-phosphate + ATP = 5-phospho-alpha-D-ribose 1-diphosphate + AMP + H(+). It participates in metabolic intermediate biosynthesis; 5-phospho-alpha-D-ribose 1-diphosphate biosynthesis; 5-phospho-alpha-D-ribose 1-diphosphate from D-ribose 5-phosphate (route I): step 1/1. Involved in the biosynthesis of the central metabolite phospho-alpha-D-ribosyl-1-pyrophosphate (PRPP) via the transfer of pyrophosphoryl group from ATP to 1-hydroxyl of ribose-5-phosphate (Rib-5-P). The protein is Ribose-phosphate pyrophosphokinase of Agrobacterium fabrum (strain C58 / ATCC 33970) (Agrobacterium tumefaciens (strain C58)).